Consider the following 860-residue polypeptide: Leucine--tRNA ligase (860 aa).

Positions 42–52 (PYPSGRLHMGH) match the 'HIGH' region motif. The short motif at 619–623 (KMSKS) is the 'KMSKS' region element. Lysine 622 lines the ATP pocket.

The protein belongs to the class-I aminoacyl-tRNA synthetase family.

It localises to the cytoplasm. It catalyses the reaction tRNA(Leu) + L-leucine + ATP = L-leucyl-tRNA(Leu) + AMP + diphosphate. The protein is Leucine--tRNA ligase of Pectobacterium carotovorum subsp. carotovorum (strain PC1).